A 370-amino-acid chain; its full sequence is Isopentenyl-diphosphate delta-isomerase (370 aa).

Substrate is bound at residue 8 to 9 (RK). FMN-binding positions include Thr65, 66 to 68 (GMT), Ser99, and Asn127. Residue 99-101 (SQR) participates in substrate binding. Residue Gln166 participates in substrate binding. A Mg(2+)-binding site is contributed by Glu167. Residues Lys198, Ser223, Thr228, 277–279 (GMR), and 298–299 (AL) contribute to the FMN site.

This sequence belongs to the IPP isomerase type 2 family. As to quaternary structure, homooctamer. Dimer of tetramers. Requires FMN as cofactor. NADPH is required as a cofactor. The cofactor is Mg(2+).

It localises to the cytoplasm. It catalyses the reaction isopentenyl diphosphate = dimethylallyl diphosphate. In terms of biological role, involved in the biosynthesis of isoprenoids. Catalyzes the 1,3-allylic rearrangement of the homoallylic substrate isopentenyl (IPP) to its allylic isomer, dimethylallyl diphosphate (DMAPP). The chain is Isopentenyl-diphosphate delta-isomerase from Pyrococcus abyssi (strain GE5 / Orsay).